A 567-amino-acid chain; its full sequence is Hexose transporter HXT16 (567 aa).

The span at 1–19 shows a compositional bias: polar residues; it reads MASEQSSPEINADNLNSSA. The interval 1–32 is disordered; sequence MASEQSSPEINADNLNSSAADVHVQPPGEKEW. Residues 1–55 lie on the Cytoplasmic side of the membrane; the sequence is MASEQSSPEINADNLNSSAADVHVQPPGEKEWSDGFYDKEVINGNTPDAPKRGFL. The helical transmembrane segment at 56 to 76 threads the bilayer; it reads GYLIIYLLCYPVSFGGFLPGW. The Extracellular portion of the chain corresponds to 77–112; sequence DSGITAGFINMDNFKMNFGSYKHSTGEYYLSNVRMG. A helical transmembrane segment spans residues 113–133; the sequence is LLVAMFSVGCSIGGVAFARLA. Over 134–139 the chain is Cytoplasmic; sequence DTLGRR. Residues 140-160 form a helical membrane-spanning segment; it reads LAIVIVVLVYMVGAIIQISSN. Over 161 to 170 the chain is Extracellular; the sequence is HKWYQYFVGK. A helical transmembrane segment spans residues 171–191; the sequence is IIYGLGAGGCSVLCPMLLSEI. The Cytoplasmic portion of the chain corresponds to 192-197; it reads APTDLR. Residues 198–218 traverse the membrane as a helical segment; sequence GGLVSLYQLNMTFGIFLGYCS. The Extracellular segment spans residues 219-232; sequence VYGTRKYSNTAQWR. A helical membrane pass occupies residues 233–253; that stretch reads IPVGLCFLWALIIIVGMLLVP. At 254–336 the chain is on the cytoplasmic side; that stretch reads ESPRYLIECE…VQTFLQLTGE (83 aa). Residues 337 to 353 form a helical membrane-spanning segment; the sequence is NYFFFYGTTIFKSVGLT. Residues 354–359 lie on the Extracellular side of the membrane; that stretch reads DGFETS. Residues 360–377 form a helical membrane-spanning segment; it reads IVLGTVNFFSTIIAVMVV. At 378–384 the chain is on the cytoplasmic side; sequence DKIGRRK. A helical transmembrane segment spans residues 385–405; that stretch reads CLLFGAASMMACMVIFASIGV. Topologically, residues 406-427 are extracellular; that stretch reads KCLYPHGQDGPSSKGAGNAMIV. A helical membrane pass occupies residues 428–448; the sequence is FTCFYIFCFATTWAPVAYIVV. At 449–465 the chain is on the cytoplasmic side; sequence AESFPSKVKSKAMSIST. The chain crosses the membrane as a helical span at residues 466 to 486; the sequence is AFNWLWQFLIGFFTPFITGSI. A topological domain (extracellular) is located at residue histidine 487. The chain crosses the membrane as a helical span at residues 488–508; sequence FYYGYVFVGCLVAMFLYVFFF. Residues 509 to 567 lie on the Cytoplasmic side of the membrane; that stretch reads LPETIGLSLEETQLLYEEGIKPWKSASWVPPSRRGASSRETEAKKKSWKEVLKFPKSFN. Residues 533-555 are disordered; it reads SASWVPPSRRGASSRETEAKKKS. Residues 545 to 555 are compositionally biased toward basic and acidic residues; sequence SSRETEAKKKS.

The protein belongs to the major facilitator superfamily. Sugar transporter (TC 2.A.1.1) family.

The protein resides in the membrane. In terms of biological role, probable glucose transporter. This is Hexose transporter HXT16 (HXT16) from Saccharomyces cerevisiae (strain ATCC 204508 / S288c) (Baker's yeast).